The following is a 122-amino-acid chain: MGDNDRTAIRRKALRRGLVSEYVAAVFLMLKGYRILALRHRTRLGEIDIVARKGDLAVFVEVKARHGEAAAVDAVSAAAQKRIRAASDLWLARQADQARLSQRYDIVAVTPSRLPRHFPDAF.

The protein belongs to the UPF0102 family.

This is UPF0102 protein RHECIAT_CH0000358 from Rhizobium etli (strain CIAT 652).